We begin with the raw amino-acid sequence, 391 residues long: Transforming growth factor beta-1 proprotein (391 aa).

Residues 1–18 (MDPSPLLALLLLLGAARA) form the signal peptide. The segment at 19 to 63 (LSTCQRLDLEAAKKKRIEAVRGQILSKLRLTAPPPASETPPRPLP) is straightjacket domain. The interval 64 to 270 (DDVRALYNST…ALPAERANEL (207 aa)) is arm domain. Asn71, Asn126, and Asn171 each carry an N-linked (GlcNAc...) asparagine glycan. Residues 221–249 (EMGPGHADEMRISIEGFEQQRGDMQSIAK) are bowtie tail. Positions 241–243 (RGD) match the Cell attachment site motif. Cystine bridges form between Cys284-Cys295, Cys294-Cys357, Cys323-Cys388, and Cys327-Cys390.

It belongs to the TGF-beta family. As to quaternary structure, latency-associated peptide: Homodimer; disulfide-linked. Latency-associated peptide: Interacts with Transforming growth factor beta-1 (TGF-beta-1) chain; interaction is non-covalent and maintains (TGF-beta-1) in a latent state; each Latency-associated peptide (LAP) monomer interacts with TGF-beta-1 in the other monomer. Transforming growth factor beta-1: Homodimer; disulfide-linked. Transforming growth factor beta-1: Interacts with TGF-beta receptors (TGFBR1 and TGFBR2), leading to signal transduction. Transforming growth factor beta-1 proprotein: The precursor proprotein is cleaved in the Golgi apparatus to form Transforming growth factor beta-1 (TGF-beta-1) and Latency-associated peptide (LAP) chains, which remain non-covalently linked, rendering TGF-beta-1 inactive.

It is found in the secreted. The protein resides in the extracellular space. The protein localises to the extracellular matrix. Functionally, transforming growth factor beta-1 proprotein: Precursor of the Latency-associated peptide (LAP) and Transforming growth factor beta-1 (TGF-beta-1) chains, which constitute the regulatory and active subunit of TGF-beta-1, respectively. In terms of biological role, required to maintain the Transforming growth factor beta-1 (TGF-beta-1) chain in a latent state during storage in extracellular matrix. Associates non-covalently with TGF-beta-1 and regulates its activation via interaction with 'milieu molecules', such as LTBP1, LRRC32/GARP and LRRC33/NRROS, that control activation of TGF-beta-1. Interaction with integrins (ITGAV:ITGB6 or ITGAV:ITGB8) results in distortion of the Latency-associated peptide chain and subsequent release of the active TGF-beta-1. Its function is as follows. Transforming growth factor beta-1: Multifunctional protein that regulates the growth and differentiation of various cell types and is involved in various processes, such as normal development, immune function, microglia function and responses to neurodegeneration. Activation into mature form follows different steps: following cleavage of the proprotein in the Golgi apparatus, Latency-associated peptide (LAP) and Transforming growth factor beta-1 (TGF-beta-1) chains remain non-covalently linked rendering TGF-beta-1 inactive during storage in extracellular matrix. At the same time, LAP chain interacts with 'milieu molecules', such as LTBP1, LRRC32/GARP and LRRC33/NRROS that control activation of TGF-beta-1 and maintain it in a latent state during storage in extracellular milieus. TGF-beta-1 is released from LAP by integrins (ITGAV:ITGB6 or ITGAV:ITGB8): integrin-binding to LAP stabilizes an alternative conformation of the LAP bowtie tail and results in distortion of the LAP chain and subsequent release of the active TGF-beta-1. Once activated following release of LAP, TGF-beta-1 acts by binding to TGF-beta receptors (TGFBR1 and TGFBR2), which transduce signal. While expressed by many cells types, TGF-beta-1 only has a very localized range of action within cell environment thanks to fine regulation of its activation by Latency-associated peptide chain (LAP) and 'milieu molecules'. Plays an important role in bone remodeling: acts as a potent stimulator of osteoblastic bone formation. Can promote either T-helper 17 cells (Th17) or regulatory T-cells (Treg) lineage differentiation in a concentration-dependent manner. Can induce epithelial-to-mesenchymal transition (EMT) and cell migration in various cell types. The chain is Transforming growth factor beta-1 proprotein (TGFB1) from Gallus gallus (Chicken).